Reading from the N-terminus, the 379-residue chain is Cytochrome b (379 aa).

Transmembrane regions (helical) follow at residues 33–53 (FGSL…FLAM), 77–98 (WLIR…FIHV), 113–133 (WNIG…GYVL), and 178–198 (FFAF…VHLL). Residues His83 and His97 each contribute to the heme b site. 2 residues coordinate heme b: His182 and His196. His201 provides a ligand contact to a ubiquinone. The next 4 membrane-spanning stretches (helical) occupy residues 226–246 (IKDL…ALFF), 288–308 (LGGV…PLLN), 320–340 (ITQT…WIGG), and 347–367 (FTMX…ILMP).

This sequence belongs to the cytochrome b family. In terms of assembly, the cytochrome bc1 complex contains 11 subunits: 3 respiratory subunits (MT-CYB, CYC1 and UQCRFS1), 2 core proteins (UQCRC1 and UQCRC2) and 6 low-molecular weight proteins (UQCRH/QCR6, UQCRB/QCR7, UQCRQ/QCR8, UQCR10/QCR9, UQCR11/QCR10 and a cleavage product of UQCRFS1). This cytochrome bc1 complex then forms a dimer. Heme b is required as a cofactor.

The protein localises to the mitochondrion inner membrane. Component of the ubiquinol-cytochrome c reductase complex (complex III or cytochrome b-c1 complex) that is part of the mitochondrial respiratory chain. The b-c1 complex mediates electron transfer from ubiquinol to cytochrome c. Contributes to the generation of a proton gradient across the mitochondrial membrane that is then used for ATP synthesis. This chain is Cytochrome b (MT-CYB), found in Necromys amoenus (Pleasant bolo mouse).